Consider the following 520-residue polypeptide: Peptide chain release factor 3 (520 aa).

A tr-type G domain is found at 8-273 (ESRKTFAIIS…AYVDHAPMPN (266 aa)). Residues 17 to 24 (SHPDAGKT), 85 to 89 (DTPGH), and 139 to 142 (NKLD) each bind GTP.

This sequence belongs to the TRAFAC class translation factor GTPase superfamily. Classic translation factor GTPase family. PrfC subfamily.

It localises to the cytoplasm. In terms of biological role, increases the formation of ribosomal termination complexes and stimulates activities of RF-1 and RF-2. It binds guanine nucleotides and has strong preference for UGA stop codons. It may interact directly with the ribosome. The stimulation of RF-1 and RF-2 is significantly reduced by GTP and GDP, but not by GMP. The polypeptide is Peptide chain release factor 3 (Staphylococcus carnosus (strain TM300)).